We begin with the raw amino-acid sequence, 179 residues long: Ubiquitin-conjugating enzyme E2 C (179 aa).

The tract at residues 1–31 (MASQNRDPAATSVAAARKGAEPSGGAARGPV) is disordered. Ala-2 carries the post-translational modification N-acetylalanine. Phosphoserine is present on Ser-3. The UBC core domain occupies 30 to 175 (PVGKRLQQEL…LQETYSKQVT (146 aa)). Cys-114 (glycyl thioester intermediate) is an active-site residue.

Belongs to the ubiquitin-conjugating enzyme family. As to quaternary structure, component of the APC/C complex, composed of at least 14 distinct subunits that assemble into a complex of at least 19 chains with a combined molecular mass of around 1.2 MDa. Within this complex, directly interacts with ANAPC2. Autoubiquitinated by the APC/C complex, leading to its degradation by the proteasome. Its degradation plays a central role in APC/C regulation, allowing cyclin-A accumulation before S phase entry. APC/C substrates inhibit the autoubiquitination of UBE2C/UBCH10 but not its E2 function, hence APC/C remaining active until its substrates have been destroyed.

The catalysed reaction is S-ubiquitinyl-[E1 ubiquitin-activating enzyme]-L-cysteine + [E2 ubiquitin-conjugating enzyme]-L-cysteine = [E1 ubiquitin-activating enzyme]-L-cysteine + S-ubiquitinyl-[E2 ubiquitin-conjugating enzyme]-L-cysteine.. It carries out the reaction S-ubiquitinyl-[E1 ubiquitin-activating enzyme]-L-cysteine + [acceptor protein]-L-lysine = [E1 ubiquitin-activating enzyme]-L-cysteine + N(6)-monoubiquitinyl-[acceptor protein]-L-lysine.. The protein operates within protein modification; protein ubiquitination. Accepts ubiquitin from the E1 complex and catalyzes its covalent attachment to other proteins. In vitro catalyzes 'Lys-11'- and 'Lys-48'-linked polyubiquitination. Acts as an essential factor of the anaphase promoting complex/cyclosome (APC/C), a cell cycle-regulated ubiquitin ligase that controls progression through mitosis. Acts by initiating 'Lys-11'-linked polyubiquitin chains on APC/C substrates, leading to the degradation of APC/C substrates by the proteasome and promoting mitotic exit. This is Ubiquitin-conjugating enzyme E2 C (UBE2C) from Homo sapiens (Human).